The following is a 202-amino-acid chain: Ribosome maturation factor RimP (202 aa).

It belongs to the RimP family.

It is found in the cytoplasm. Its function is as follows. Required for maturation of 30S ribosomal subunits. The protein is Ribosome maturation factor RimP of Polaromonas naphthalenivorans (strain CJ2).